A 247-amino-acid chain; its full sequence is 14-3-3 protein gamma-B (247 aa).

The protein belongs to the 14-3-3 family. In terms of assembly, homodimer, and heterodimer with other family members.

It is found in the cytoplasm. In terms of biological role, adapter protein implicated in the regulation of a large spectrum of both general and specialized signaling pathways. Binds to a large number of partners, usually by recognition of a phosphoserine or phosphothreonine motif. Binding generally results in the modulation of the activity of the binding partner. This is 14-3-3 protein gamma-B (ywhag-b) from Xenopus laevis (African clawed frog).